The following is a 188-amino-acid chain: MEDEIRAFCQTAADCFIRLGDCAPAIAEAAGVVTASLRAGGKVMFCGNGGSAADAQHLAAELEGRYLKERAPLPGMALTTNTSTLTAVGNDYGFDHIFSRQVSAHGRPGDVLVALSTSGNSANVLKAIEAAREKGVSVIGLTGAGGGKMAEVCDLCIRVPSTQTPQIQQMHIAVGHLLCGLVEDALCS.

The SIS domain maps to 33–188 (VTASLRAGGK…CGLVEDALCS (156 aa)). 48–50 (NGG) is a binding site for substrate. Residues His-57 and Glu-61 each contribute to the Zn(2+) site. Substrate contacts are provided by residues Glu-61, 90 to 91 (ND), 116 to 118 (STS), Ser-121, and Gln-168. Zn(2+) contacts are provided by Gln-168 and His-176.

This sequence belongs to the SIS family. GmhA subfamily. In terms of assembly, homotetramer. Requires Zn(2+) as cofactor.

The protein resides in the cytoplasm. The catalysed reaction is 2 D-sedoheptulose 7-phosphate = D-glycero-alpha-D-manno-heptose 7-phosphate + D-glycero-beta-D-manno-heptose 7-phosphate. It functions in the pathway carbohydrate biosynthesis; D-glycero-D-manno-heptose 7-phosphate biosynthesis; D-glycero-alpha-D-manno-heptose 7-phosphate and D-glycero-beta-D-manno-heptose 7-phosphate from sedoheptulose 7-phosphate: step 1/1. Catalyzes the isomerization of sedoheptulose 7-phosphate in D-glycero-D-manno-heptose 7-phosphate. In Rhodospirillum rubrum (strain ATCC 11170 / ATH 1.1.1 / DSM 467 / LMG 4362 / NCIMB 8255 / S1), this protein is Phosphoheptose isomerase.